Reading from the N-terminus, the 324-residue chain is NADH-ubiquinone oxidoreductase chain 1 (324 aa).

The next 8 helical transmembrane spans lie at 9-29, 76-96, 106-126, 146-166, 177-197, 228-248, 259-279, and 299-319; these read LINP…LTLL, LFLV…APMP, LGVL…LGSG, ISYE…WGGY, ALWL…STLA, LLFL…AILF, ELTT…FLWV, and FLPL…AFAG.

It belongs to the complex I subunit 1 family.

It is found in the mitochondrion inner membrane. It carries out the reaction a ubiquinone + NADH + 5 H(+)(in) = a ubiquinol + NAD(+) + 4 H(+)(out). Functionally, core subunit of the mitochondrial membrane respiratory chain NADH dehydrogenase (Complex I) that is believed to belong to the minimal assembly required for catalysis. Complex I functions in the transfer of electrons from NADH to the respiratory chain. The immediate electron acceptor for the enzyme is believed to be ubiquinone. This chain is NADH-ubiquinone oxidoreductase chain 1 (MT-ND1), found in Formosania lacustris (Oriental stream loach).